The sequence spans 146 residues: Putative pre-16S rRNA nuclease (146 aa).

It belongs to the YqgF nuclease family.

It is found in the cytoplasm. In terms of biological role, could be a nuclease involved in processing of the 5'-end of pre-16S rRNA. The sequence is that of Putative pre-16S rRNA nuclease from Pseudomonas syringae pv. tomato (strain ATCC BAA-871 / DC3000).